The primary structure comprises 272 residues: Shikimate dehydrogenase (NADP(+)) (272 aa).

Shikimate contacts are provided by residues Ser14 to Ser16 and Thr61. Lys65 (proton acceptor) is an active-site residue. Shikimate is bound by residues Asn86 and Asp102. NADP(+)-binding positions include Gly126 to Ala130, Asn149 to Lys154, Ser189, and Met213. Tyr215 contacts shikimate. Gly238 is an NADP(+) binding site.

This sequence belongs to the shikimate dehydrogenase family. In terms of assembly, homodimer.

The catalysed reaction is shikimate + NADP(+) = 3-dehydroshikimate + NADPH + H(+). It participates in metabolic intermediate biosynthesis; chorismate biosynthesis; chorismate from D-erythrose 4-phosphate and phosphoenolpyruvate: step 4/7. In terms of biological role, involved in the biosynthesis of the chorismate, which leads to the biosynthesis of aromatic amino acids. Catalyzes the reversible NADPH linked reduction of 3-dehydroshikimate (DHSA) to yield shikimate (SA). The chain is Shikimate dehydrogenase (NADP(+)) from Haemophilus influenzae (strain ATCC 51907 / DSM 11121 / KW20 / Rd).